Here is a 168-residue protein sequence, read N- to C-terminus: ATP synthase subunit b (168 aa).

The helical transmembrane segment at 11-31 (EISIINTLWYLIVFSILLLAV) threads the bilayer.

The protein belongs to the ATPase B chain family. As to quaternary structure, F-type ATPases have 2 components, F(1) - the catalytic core - and F(0) - the membrane proton channel. F(1) has five subunits: alpha(3), beta(3), gamma(1), delta(1), epsilon(1). F(0) has three main subunits: a(1), b(2) and c(10-14). The alpha and beta chains form an alternating ring which encloses part of the gamma chain. F(1) is attached to F(0) by a central stalk formed by the gamma and epsilon chains, while a peripheral stalk is formed by the delta and b chains.

The protein localises to the cell membrane. Functionally, f(1)F(0) ATP synthase produces ATP from ADP in the presence of a proton or sodium gradient. F-type ATPases consist of two structural domains, F(1) containing the extramembraneous catalytic core and F(0) containing the membrane proton channel, linked together by a central stalk and a peripheral stalk. During catalysis, ATP synthesis in the catalytic domain of F(1) is coupled via a rotary mechanism of the central stalk subunits to proton translocation. Component of the F(0) channel, it forms part of the peripheral stalk, linking F(1) to F(0). The polypeptide is ATP synthase subunit b (Lactobacillus delbrueckii subsp. bulgaricus (strain ATCC 11842 / DSM 20081 / BCRC 10696 / JCM 1002 / NBRC 13953 / NCIMB 11778 / NCTC 12712 / WDCM 00102 / Lb 14)).